The primary structure comprises 299 residues: GTPase Era (299 aa).

Residues 9–177 (RSGSVAVIGR…VGDLLKLVPE (169 aa)) enclose the Era-type G domain. A G1 region spans residues 17-24 (GRPNVGKS). 17–24 (GRPNVGKS) contributes to the GTP binding site. Positions 43–47 (QTTRH) are G2. The segment at 64-67 (DTPG) is G3. Residues 64-68 (DTPGL) and 126-129 (NKVD) each bind GTP. Residues 126–129 (NKVD) form a G4 region. The tract at residues 156–158 (VSA) is G5. Residues 200-284 (VREQLMRQLG…FLETWVRVRE (85 aa)) enclose the KH type-2 domain.

This sequence belongs to the TRAFAC class TrmE-Era-EngA-EngB-Septin-like GTPase superfamily. Era GTPase family. As to quaternary structure, monomer.

The protein resides in the cytoplasm. It localises to the cell inner membrane. Functionally, an essential GTPase that binds both GDP and GTP, with rapid nucleotide exchange. Plays a role in 16S rRNA processing and 30S ribosomal subunit biogenesis and possibly also in cell cycle regulation and energy metabolism. This is GTPase Era from Xanthomonas axonopodis pv. citri (strain 306).